The following is a 625-amino-acid chain: Phosphomethylpyrimidine synthase (625 aa).

Substrate is bound by residues N230, M259, Y288, H324, 344–346 (SRG), 385–388 (DGLR), and E424. H428 contacts Zn(2+). Y451 is a substrate binding site. H492 provides a ligand contact to Zn(2+). Residues C572, C575, and C580 each coordinate [4Fe-4S] cluster.

It belongs to the ThiC family. In terms of assembly, homodimer. It depends on [4Fe-4S] cluster as a cofactor.

It catalyses the reaction 5-amino-1-(5-phospho-beta-D-ribosyl)imidazole + S-adenosyl-L-methionine = 4-amino-2-methyl-5-(phosphooxymethyl)pyrimidine + CO + 5'-deoxyadenosine + formate + L-methionine + 3 H(+). It participates in cofactor biosynthesis; thiamine diphosphate biosynthesis. In terms of biological role, catalyzes the synthesis of the hydroxymethylpyrimidine phosphate (HMP-P) moiety of thiamine from aminoimidazole ribotide (AIR) in a radical S-adenosyl-L-methionine (SAM)-dependent reaction. The sequence is that of Phosphomethylpyrimidine synthase from Xanthomonas euvesicatoria pv. vesicatoria (strain 85-10) (Xanthomonas campestris pv. vesicatoria).